The sequence spans 477 residues: MSGLSRALQLTDIDDFITPSQMCIKPVKIDKAKSKTGAKIMIKDDSCFEESESGKKKLNKVEITLQDCLACSGCITSAEGVLITQQSQEELLRVLQENLTKKATEDWGNVRTIVFTIATQPLLSLAHRYQIGVEDSARHLAGYFRSLGADYVLSTKVADDIALLECRQEFVERYRENENLTMLSSSCPGWVCYAEKTHGNFILPYISTTRSPQQIMGVLVKHVFAEKLNVPASQIYHVTVMPCYDKKLEASREDFFSTANNSRDVDCVITSVEVEQLLSESQRTLAQYDPVDLDWPWSNVPPDFMVWAHEKTLSGGYAEHIFKFAAKELFNEVPRSELEFKQLKNRDFREIILKKNGNTVLKFAIANGFRNIQNLVHKLKRGKVSNYHFVEVMACPSGCINGGAQIRPTTGQHVRELTRKLEELYHNLPQSDPENSLTKLIYTDFLDGFQTEKSYELLHTRYHDVVSELSKSLNINW.

[4Fe-4S] cluster-binding residues include cysteine 23, cysteine 68, cysteine 71, cysteine 74, cysteine 187, cysteine 243, cysteine 395, and cysteine 399.

The protein belongs to the NARF family.

Functionally, component of the cytosolic iron-sulfur (Fe/S) protein assembly machinery. Required for maturation of extramitochondrial Fe/S proteins. The polypeptide is Probable cytosolic Fe-S cluster assembly factor GG21400 (Drosophila erecta (Fruit fly)).